A 119-amino-acid polypeptide reads, in one-letter code: Ribosome-binding factor A (119 aa).

The protein belongs to the RbfA family. In terms of assembly, monomer. Binds 30S ribosomal subunits, but not 50S ribosomal subunits or 70S ribosomes.

It localises to the cytoplasm. Functionally, one of several proteins that assist in the late maturation steps of the functional core of the 30S ribosomal subunit. Associates with free 30S ribosomal subunits (but not with 30S subunits that are part of 70S ribosomes or polysomes). Required for efficient processing of 16S rRNA. May interact with the 5'-terminal helix region of 16S rRNA. The protein is Ribosome-binding factor A of Limosilactobacillus reuteri (strain DSM 20016) (Lactobacillus reuteri).